Here is a 1343-residue protein sequence, read N- to C-terminus: DNA-directed RNA polymerase subunit beta (1343 aa).

This sequence belongs to the RNA polymerase beta chain family. As to quaternary structure, the RNAP catalytic core consists of 2 alpha, 1 beta, 1 beta' and 1 omega subunit. When a sigma factor is associated with the core the holoenzyme is formed, which can initiate transcription.

It catalyses the reaction RNA(n) + a ribonucleoside 5'-triphosphate = RNA(n+1) + diphosphate. Functionally, DNA-dependent RNA polymerase catalyzes the transcription of DNA into RNA using the four ribonucleoside triphosphates as substrates. In Shewanella sediminis (strain HAW-EB3), this protein is DNA-directed RNA polymerase subunit beta.